The following is a 406-amino-acid chain: Probable endo-xylogalacturonan hydrolase A (406 aa).

Positions 1–18 are cleaved as a signal peptide; that stretch reads MISLNSIFLLSLVGLSRA. Residues 20 to 49 form a disordered region; the sequence is PSRSETSPDRTIKPRAACTPTAGGSSSTDD. PbH1 repeat units follow at residues 183–213, 214–235, 237–257, 266–289, 299–320, and 368–390; these read TSNA…DIGA, STYV…AFKP, ANYV…SVGS, VQNV…KTYP, VKNA…QIQS, and TCDV…ILCG. The Proton donor role is filled by Asp-228. Asn-244 is a glycosylation site (N-linked (GlcNAc...) asparagine). His-251 is a catalytic residue. N-linked (GlcNAc...) asparagine glycans are attached at residues Asn-273, Asn-278, and Asn-301.

It belongs to the glycosyl hydrolase 28 family.

The protein localises to the secreted. Pectinolytic enzyme involved in the degradation of xylogalacturonan (xga), a galacturonan backbone heavily substituted with xylose, and which is one important component of the hairy regions of pectin. Activity requires a galacturonic acid backbone substituted with xylose. This Aspergillus oryzae (strain ATCC 42149 / RIB 40) (Yellow koji mold) protein is Probable endo-xylogalacturonan hydrolase A (xghA).